Here is a 546-residue protein sequence, read N- to C-terminus: Chaperonin GroEL 2 (546 aa).

Residues 30–33, Lys-51, 87–91, Gly-415, 479–481, and Asp-495 each bind ATP; these read TLGP, DGTTT, and NAA.

The protein belongs to the chaperonin (HSP60) family. As to quaternary structure, forms a cylinder of 14 subunits composed of two heptameric rings stacked back-to-back. Interacts with the co-chaperonin GroES.

It is found in the cytoplasm. The enzyme catalyses ATP + H2O + a folded polypeptide = ADP + phosphate + an unfolded polypeptide.. Functionally, together with its co-chaperonin GroES, plays an essential role in assisting protein folding. The GroEL-GroES system forms a nano-cage that allows encapsulation of the non-native substrate proteins and provides a physical environment optimized to promote and accelerate protein folding. The chain is Chaperonin GroEL 2 from Chromobacterium violaceum (strain ATCC 12472 / DSM 30191 / JCM 1249 / CCUG 213 / NBRC 12614 / NCIMB 9131 / NCTC 9757 / MK).